Here is a 646-residue protein sequence, read N- to C-terminus: Chaperone protein DnaK (646 aa).

The residue at position 197 (Thr197) is a Phosphothreonine; by autocatalysis. The segment at 599–646 (QQGAQAGADPNAGSSQGAQAGTDYGTSGPKTGTADDVDYEVVNDDNDK) is disordered. The segment covering 610–628 (AGSSQGAQAGTDYGTSGPK) has biased composition (polar residues). A compositionally biased stretch (acidic residues) spans 633–646 (DDVDYEVVNDDNDK).

Belongs to the heat shock protein 70 family.

Functionally, acts as a chaperone. This Treponema denticola (strain ATCC 35405 / DSM 14222 / CIP 103919 / JCM 8153 / KCTC 15104) protein is Chaperone protein DnaK.